We begin with the raw amino-acid sequence, 1221 residues long: Adhesion G-protein coupled receptor G6 (1221 aa).

The N-terminal stretch at 1–37 is a signal peptide; the sequence is MMFRSDRMWSCHWKWKPSPLLFLFALYIMCVPHSVWG. At 38-862 the chain is on the extracellular side; it reads CANCRVVLSN…ASQLDARNTK (825 aa). Cysteines 41 and 67 form a disulfide. The region spanning 41 to 149 is the CUB domain; that stretch reads CRVVLSNPSG…KGFNASYIRV (109 aa). The Ca(2+) site is built by Glu89 and Asp97. Cysteines 94 and 111 form a disulfide. A glycan (N-linked (GlcNAc...) asparagine) is linked at Asn121. Residues Asp134, Ser136, and Ile137 each contribute to the Ca(2+) site. Residues Asn143, Asn206, Asn258, Asn314, Asn324, Asn353, Asn438, Asn445, Asn452, Asn485, Asn488, and Asn505 are each glycosylated (N-linked (GlcNAc...) asparagine). In terms of domain architecture, Pentraxin (PTX) spans 154–356; that stretch reads RNQKVILPQT…ALKAESNLSC (203 aa). 2 disulfides stabilise this stretch: Cys186–Cys254 and Cys231–Cys277. The segment at 473-837 is mediates interaction with laminin-2; that stretch reads EPRLVLWALL…SDASETVCLC (365 aa). Disulfide bonds link Cys525/Cys560 and Cys548/Cys580. Asn563, Asn593, Asn600, Asn605, Asn667, Asn673, Asn695, Asn704, Asn750, Asn776, Asn811, and Asn818 each carry an N-linked (GlcNAc...) asparagine glycan. Residues 670–853 form the GAIN-B domain; that stretch reads SHVNITTRNL…GVLMDLPRSA (184 aa). Intrachain disulfides connect Cys803–Cys835 and Cys822–Cys837. The segment at 803–853 is GPS; the sequence is CAFWDLNKNKSFGGWNTSGCVAHRDSDASETVCLCNHFTHFGVLMDLPRSA. Positions 842-850 are stachel; it reads HFGVLMDLP. The chain crosses the membrane as a helical span at residues 863–883; that stretch reads VLTFISYIGCGISAIFSAATL. Topologically, residues 884–903 are cytoplasmic; the sequence is LTYVAFEKLRRDYPSKILMN. A helical membrane pass occupies residues 904–924; the sequence is LSTALLFLNLLFLLDGWITSF. The Extracellular portion of the chain corresponds to 925–929; that stretch reads NVDGL. Residues 930-950 form a helical membrane-spanning segment; the sequence is CIAVAVLLHFFLLATFTWMGL. The Cytoplasmic portion of the chain corresponds to 951–970; that stretch reads EAIHMYIALVKVFNTYIRRY. Residues 971–991 traverse the membrane as a helical segment; it reads ILKFCIIGWGLPALVVSVVLA. Over 992–1024 the chain is Extracellular; it reads SRNNNEVYGKESYGKEKGDEFCWIQDPVIFYVT. Residues 1025–1045 traverse the membrane as a helical segment; that stretch reads CAGYFGVMFFLNIAMFIVVMV. Over 1046-1069 the chain is Cytoplasmic; the sequence is QICGRNGKRSNRTLREEVLRNLRS. The helical transmembrane segment at 1070-1090 threads the bilayer; the sequence is VVSLTFLLGMTWGFAFFAWGP. Residues 1091 to 1092 lie on the Extracellular side of the membrane; sequence LN. Residues 1093–1113 form a helical membrane-spanning segment; that stretch reads IPFMYLFSIFNSLQGLFIFIF. Residue Asn1103 participates in 17alpha-hydroxyprogesterone binding. At 1114 to 1221 the chain is on the cytoplasmic side; it reads HCAMKENVQK…GQVLVKTGPC (108 aa). The disordered stretch occupies residues 1156–1176; sequence NLGKSLSSSSIGSNSTYLTSK. 2 positions are modified to phosphoserine: Ser1165 and Ser1168.

This sequence belongs to the G-protein coupled receptor 2 family. Adhesion G-protein coupled receptor (ADGR) subfamily. Heterodimer of 2 chains generated by proteolytic processing; the large extracellular N-terminal fragment and the membrane-bound C-terminal fragment predominantly remain associated and non-covalently linked. Interacts with Laminin-2; this interaction stabilizes the receptor in an inactive state. Laminin-2 polymerization could facilitate ADGRG6-NTF removal, thereby exposing the tethered agonist to drive myelination. Interacts with PRNP. Interacts with ITGB1. Interacts with LRP1. In terms of processing, proteolytically cleaved into 2 conserved sites: one in the GPS region of the GAIN-B domain (S1 site) and the other in the middle of the extracellular domain (S2 site). The proteolytic cleavage at S1 site generates an extracellular subunit and a seven-transmembrane subunit. Furin is involved in the cleavage of the S2 site generating a soluble fragment. Processing at the GPS region occurred independent of and probably prior to the cleavage at the S2 site. Proteolytic cleavage is required for activation of the receptor. Post-translationally, highly glycosylated. Expressed in placenta and to a lower extent in pancreas and liver. Detected in aortic endothelial cells but not in skin microvascular endothelial cells.

The protein localises to the cell membrane. Its activity is regulated as follows. Forms a heterodimer of 2 chains generated by proteolytic processing that remain associated through non-covalent interactions mediated by the GAIN-B domain. In the inactivated receptor, the Stachel sequence (also named stalk) is embedded in the GAIN-B domain, where it adopts a beta-strand conformation. On activation, the Stachel moves into the 7 transmembrane region and adopts a twisted hook-shaped configuration that forms contacts within the receptor, leading to coupling of a G-alpha protein, which activates signaling. The cleaved GAIN-B and N-terminal domains can then dissociate from the rest of the receptor. Adhesion G-protein coupled receptor (aGPCR) for steroid hormones, such as progesterone and 17alpha-hydroxyprogesterone (17OHP). Involved in many biological processes, such as myelination, sprouting angiogenesis, placenta, ear and cartilage development. Ligand binding causes a conformation change that triggers signaling via guanine nucleotide-binding proteins (G proteins) and modulates the activity of downstream effectors, such as adenylate cyclase. ADGRG6 is coupled to G(i) G alpha proteins and mediates inhibition of adenylate cyclase. Also able to couple to G(q) G proteins. Involved in myelination of the peripheral nervous system: required for differentiation of promyelinating Schwann cells and for normal myelination of axons. Also acts as a regulator of body length and bone mass. Acts as a regulator of blood-brain barrier formation in the central nervous system vie its association with LRP1 and ITGB1. The sequence is that of Adhesion G-protein coupled receptor G6 from Homo sapiens (Human).